A 102-amino-acid chain; its full sequence is Vacuolar ATPase assembly integral membrane protein VMA21 homolog (102 aa).

Residues 1-33 (MTTSSSSEPSTMATLFPNFRDQEVQSAVKNLLT) are Cytoplasmic-facing. Residues 34-54 (YSLVILIVPLASMFLLKQFFF) form a helical membrane-spanning segment. Over 55–67 (EGLLGVSANDALT) the chain is Lumenal. A helical transmembrane segment spans residues 68–88 (YSAIIAVVLVHVVLGIWLFAA). The Cytoplasmic portion of the chain corresponds to 89–102 (TKQEDRKKRENKQD).

It belongs to the VMA21 family.

It is found in the endoplasmic reticulum membrane. The protein resides in the endoplasmic reticulum-Golgi intermediate compartment membrane. It localises to the cytoplasmic vesicle. The protein localises to the COPII-coated vesicle membrane. In terms of biological role, required for the assembly of the V0 complex of the vacuolar ATPase (V-ATPase) in the endoplasmic reticulum. This is Vacuolar ATPase assembly integral membrane protein VMA21 homolog from Caenorhabditis elegans.